Consider the following 222-residue polypeptide: Eukaryotic translation initiation factor 3 subunit K (222 aa).

The 163-residue stretch at 46–208 (YDLEANLAVL…KIKTKNITEK (163 aa)) folds into the PCI domain.

Belongs to the eIF-3 subunit K family. Component of the eukaryotic translation initiation factor 3 (eIF-3) complex. The eIF-3 complex interacts with pix.

Its subcellular location is the cytoplasm. Its function is as follows. Component of the eukaryotic translation initiation factor 3 (eIF-3) complex, which is involved in protein synthesis of a specialized repertoire of mRNAs and, together with other initiation factors, stimulates binding of mRNA and methionyl-tRNAi to the 40S ribosome. The eIF-3 complex specifically targets and initiates translation of a subset of mRNAs involved in cell proliferation. The polypeptide is Eukaryotic translation initiation factor 3 subunit K (Drosophila yakuba (Fruit fly)).